The sequence spans 594 residues: Putative diflavin flavoprotein A 4 (594 aa).

The interval 57-250 (RRGTTSNSYL…LTLKMIAPGH (194 aa)) is zinc metallo-hydrolase. One can recognise a Flavodoxin-like domain in the interval 279 to 417 (VALIYASAYG…VCTTSGANFA (139 aa)). Residues 445 to 594 (VGRIIGSIGV…IRHRKSGGQY (150 aa)) are flavodoxin-reductase-like.

This sequence in the N-terminal section; belongs to the zinc metallo-hydrolase group 3 family. It in the C-terminal section; belongs to the flavodoxin reductase family. It depends on Fe cation as a cofactor.

Its function is as follows. Mediates electron transfer from NADH to oxygen, reducing it to water. This modular protein has 3 redox cofactors, in other organisms the same activity requires 2 or 3 proteins. The chain is Putative diflavin flavoprotein A 4 (dfa4) from Synechocystis sp. (strain ATCC 27184 / PCC 6803 / Kazusa).